A 327-amino-acid polypeptide reads, in one-letter code: Probable cytosolic iron-sulfur protein assembly protein CIAO1 homolog (327 aa).

7 WD repeats span residues 3-42 (GHED…WICK), 48-87 (GHQR…FECN), 92-131 (GHEN…EYEC), 137-176 (SHTQ…WSCC), 181-220 (GHES…NQEG), 239-278 (YHDR…DRNQ), and 290-327 (AHSM…PAEE).

This sequence belongs to the WD repeat CIA1 family.

Functionally, essential component of the cytosolic iron-sulfur (Fe/S) protein assembly machinery. Required for the maturation of extramitochondrial Fe/S proteins. This is Probable cytosolic iron-sulfur protein assembly protein CIAO1 homolog from Nematostella vectensis (Starlet sea anemone).